The following is a 422-amino-acid chain: Fasciclin-like arabinogalactan protein 10 (422 aa).

An N-terminal signal peptide occupies residues M1–G25. FAS1 domains lie at H26–I172 and G187–L327. N-linked (GlcNAc...) asparagine glycans are attached at residues N27, N128, N162, N190, and N244. Residues S336–K397 are disordered. Over residues A340–P374 the composition is skewed to pro residues. Residues D386–K397 show a composition bias toward polar residues. N398 is lipidated: GPI-anchor amidated asparagine. The propeptide at A399–L422 is removed in mature form.

This sequence belongs to the fasciclin-like AGP family.

It is found in the cell membrane. In terms of biological role, may be a cell surface adhesion protein. This is Fasciclin-like arabinogalactan protein 10 (FLA10) from Arabidopsis thaliana (Mouse-ear cress).